Here is a 312-residue protein sequence, read N- to C-terminus: Olfactory receptor 2T10 (312 aa).

The Extracellular portion of the chain corresponds to 1-25 (MRLANQTLGGDFFLLGIFSQISHPG). An N-linked (GlcNAc...) asparagine glycan is attached at Asn-5. Residues 26–49 (RLCLLIFSIFLMAVSWNITLILLI) form a helical membrane-spanning segment. Over 50–57 (HIDSSLHT) the chain is Cytoplasmic. The helical transmembrane segment at 58–79 (PMYFFINQLSLIDLTYISVTVP) threads the bilayer. At 80-100 (KMLVNQLAKDKTISVLGCGTQ) the chain is on the extracellular side. A disulfide bridge links Cys-97 with Cys-189. Residues 101–120 (MYFYLQLGGAECCLLAAMAY) traverse the membrane as a helical segment. The Cytoplasmic portion of the chain corresponds to 121–139 (DRYVAICHPLRYSVLMSHR). A helical membrane pass occupies residues 140-158 (VCLLLASGCWFVGSVDGFM). Topologically, residues 159 to 195 (LTPIAMSFPFCRSHEIQHFFCEVPAVLKLSCSDTSLY) are extracellular. The chain crosses the membrane as a helical span at residues 196–219 (KIFMYLCCVIMLLIPVTVISVSYY). Over 220–236 (YIILTIHKMNSVEGRKK) the chain is Cytoplasmic. Residues 237 to 259 (AFTTCSSHITVVSLFYGAAIYNY) form a helical membrane-spanning segment. The Extracellular portion of the chain corresponds to 260-272 (MLPSSYQTPEKDM). The helical transmembrane segment at 273-292 (MSSFFYTILTPVLNPIIYSF) threads the bilayer. At 293-312 (RNKDVTRALKKMLSVQKPPY) the chain is on the cytoplasmic side.

Belongs to the G-protein coupled receptor 1 family.

Its subcellular location is the cell membrane. Functionally, odorant receptor. In Homo sapiens (Human), this protein is Olfactory receptor 2T10 (OR2T10).